Reading from the N-terminus, the 89-residue chain is DNA/RNA-binding protein Alba (89 aa).

At Lys-11 the chain carries N6-acetyllysine.

It belongs to the histone-like Alba family. Acetylated. Acetylation at Lys-11 decreases DNA-binding affinity.

It localises to the cytoplasm. The protein localises to the chromosome. In terms of biological role, binds double-stranded DNA tightly but without sequence specificity. Involved in DNA compaction. The sequence is that of DNA/RNA-binding protein Alba from Thermoplasma volcanium (strain ATCC 51530 / DSM 4299 / JCM 9571 / NBRC 15438 / GSS1).